Reading from the N-terminus, the 308-residue chain is MNTAPSPSDRPLSHALSHTPVLAAEVVAALAPAPGRVIVDGTLGGAGHTRLLLEAGASVIGIDQDPYALNRAREAQLPQLTVLEGNYRDMRELLAGIGVTQVDGVLLDIGVSSFQLDDAARGFSYHTDAPLDMRMAQSGESAAEVVNGYPEEELAAIIYEYGEERHSRRIARAIVQARTQAPIQSTVQLAEIIKRAYPGFSKGIHPARRTFQALRIHVNDELGALRDGLRAAEALLTPGGRLAVIAFHSLEDRIVKRFLRASPTLKSLTKRPVEASEEERGRNPRARSAKLRAAEKVAAPEGLPEVEV.

S-adenosyl-L-methionine-binding positions include 46–48, D63, Y87, D108, and Q115; that span reads AGH. A disordered region spans residues 269 to 308; sequence TKRPVEASEEERGRNPRARSAKLRAAEKVAAPEGLPEVEV. Residues 271 to 282 are compositionally biased toward basic and acidic residues; that stretch reads RPVEASEEERGR.

The protein belongs to the methyltransferase superfamily. RsmH family.

It localises to the cytoplasm. It carries out the reaction cytidine(1402) in 16S rRNA + S-adenosyl-L-methionine = N(4)-methylcytidine(1402) in 16S rRNA + S-adenosyl-L-homocysteine + H(+). Functionally, specifically methylates the N4 position of cytidine in position 1402 (C1402) of 16S rRNA. The protein is Ribosomal RNA small subunit methyltransferase H of Deinococcus geothermalis (strain DSM 11300 / CIP 105573 / AG-3a).